A 192-amino-acid polypeptide reads, in one-letter code: PBAN-type neuropeptides (192 aa).

An N-terminal signal peptide occupies residues 1-23; it reads MYKTNIVFNVLALALFSIFFASC. Position 47 is a leucine amide (Leu-47). Positions 51-94 are excised as a propeptide; sequence SMKPSTEDNRQTFLRLLEAADALKFYYDQLPYERQADEPETKVT. Leucine amide occurs at positions 103, 122, 158, and 168. Positions 171–192 are excised as a propeptide; that stretch reads ELSYDYPTKYRVARSVNKTMDN.

Belongs to the pyrokinin family. In terms of tissue distribution, expression is restricted to the subesophageal ganglion.

It localises to the secreted. Functionally, a hormone that controls sex pheromone production in females and pheromone responsiveness in male. Also mediates visceral muscle contractile activity (myotropic activity). Identical to MRCH which is implicated in the formation of both melanin in the cuticle and ommochrome in the epidermis of armyworm species. Diapause hormone (DH) is responsible for induction of embryonic diapause. In terms of biological role, the three SGNPS are far less active than DH in inducing diapause eggs. Beta-SGNP expressed higher pban activity than PBAN-I, but alpha- and gamma-SGNP were far less active in pheromonotropic activity. This chain is PBAN-type neuropeptides, found in Bombyx mori (Silk moth).